A 314-amino-acid polypeptide reads, in one-letter code: Phospholipid phosphatase-related protein type 5 (314 aa).

Transmembrane regions (helical) follow at residues 5–25, 61–81, 120–140, 194–214, 223–243, and 250–270; these read FSLT…VMLA, IPPV…IIVG, FLGI…AGQV, AALS…TIKA, VLCL…VAEY, and VIAG…CVVN.

Belongs to the PA-phosphatase related phosphoesterase family.

Its subcellular location is the cell membrane. In terms of biological role, induces filopodia formation and promotes neurite growth. The sequence is that of Phospholipid phosphatase-related protein type 5 from Xenopus laevis (African clawed frog).